A 2629-amino-acid chain; its full sequence is Protein DOP1 homolog (2629 aa).

7 disordered regions span residues 561 to 584 (NKGVPGTHTQGSSLEKSKSDSRLN), 605 to 652 (SASN…TPRS), 688 to 710 (AGNVHDAEEPKSAPPDPQSPQFY), 1278 to 1340 (MDES…SSSA), 1371 to 1395 (TYRLTREKTPGENSLNSVATDQTEH), 1435 to 1471 (ISKTSTDSNLSNSCSQAEPAPEGDPQGEEEATAATDS), and 1766 to 1785 (RQDTPPAAGDDSTGNTSPTR). Polar residues-rich tracts occupy residues 605 to 615 (SASNQSVGRQS) and 636 to 647 (ASDTGQQSSSDL). A compositionally biased stretch (acidic residues) spans 1307–1320 (DITDNSDSSDFESD). Positions 1321-1333 (SELRETSLEKEDS) are enriched in basic and acidic residues. 2 stretches are compositionally biased toward polar residues: residues 1381 to 1391 (GENSLNSVATD) and 1435 to 1450 (ISKTSTDSNLSNSCSQ).

The protein belongs to the DOP1 family.

The protein localises to the golgi apparatus membrane. In terms of biological role, may be involved in protein traffic between late Golgi and early endosomes. This Drosophila pseudoobscura pseudoobscura (Fruit fly) protein is Protein DOP1 homolog.